Reading from the N-terminus, the 374-residue chain is P2Y purinoceptor 2 (374 aa).

At 1–32 the chain is on the extracellular side; it reads MAAGLDSWNSTINGTWEGDELGYKCRFNEDFK. 2 N-linked (GlcNAc...) asparagine glycosylation sites follow: Asn9 and Asn13. The helical transmembrane segment at 33 to 59 threads the bilayer; the sequence is YVLLPVSYGVVCVLGLCLNVVALYIFL. The Cytoplasmic segment spans residues 60–70; the sequence is CRLKTWNASTT. The helical transmembrane segment at 71–93 threads the bilayer; the sequence is YMFHLAVSDSLYAASLPLLVYYY. The Extracellular portion of the chain corresponds to 94-110; that stretch reads AQGDHWPFSTVLCKLVR. Cysteines 106 and 183 form a disulfide. Residues 111–129 form a helical membrane-spanning segment; that stretch reads FLFYTNLYCSILFLTCISV. Topologically, residues 130–152 are cytoplasmic; sequence HRCLGVLRPLHSLSWGHARYARR. The chain crosses the membrane as a helical span at residues 153 to 172; sequence VAAVVWVLVLACQAPVLYFV. Topologically, residues 173–194 are extracellular; it reads TTSVRGTRITCHDTSARELFSH. A helical membrane pass occupies residues 195-220; the sequence is FVAYSSVMLGLLFAVPFSIILVCYVL. The Cytoplasmic segment spans residues 221–245; sequence MARRLLKPAYGTTGLPRAKRKSVRT. A helical membrane pass occupies residues 246-268; it reads IALVLAVFALCFLPFHVTRTLYY. Residues 269–286 lie on the Extracellular side of the membrane; it reads SFRSLDLSCHTLNAINMA. The helical transmembrane segment at 287-308 threads the bilayer; it reads YKITRPLASANSCLDPVLYFLA. Over 309–374 the chain is Cytoplasmic; the sequence is GQRLVRFARD…AGSETKDIRL (66 aa). Residues 318–374 form a disordered region; sequence DAKPATEPTPSPQARRKLGLHRPNRTDTVRKDLSISSDDSRRTESTPAGSETKDIRL. Residues 331-340 are compositionally biased toward basic residues; the sequence is ARRKLGLHRP. A compositionally biased stretch (basic and acidic residues) spans 341–361; the sequence is NRTDTVRKDLSISSDDSRRTE.

The protein belongs to the G-protein coupled receptor 1 family.

It is found in the cell membrane. In terms of biological role, receptor for ATP and UTP coupled to G-proteins that activate a phosphatidylinositol-calcium second messenger system. The affinity range is UTP = ATP &gt; ATP-gamma-S &gt;&gt; 2-methylthio-ATP = ADP. This chain is P2Y purinoceptor 2 (P2ry2), found in Rattus norvegicus (Rat).